The following is a 216-amino-acid chain: Probable GH family 25 lysozyme 5 (216 aa).

Positions 1 to 20 are cleaved as a signal peptide; the sequence is MRFIISLLFVFTLIFNLAFS. Residues 21-216 enclose the Ch-type lysozyme domain; sequence HIGIDVSSGT…GLGIDKNYWE (196 aa). Asp-25 is a catalytic residue. Asn-31 carries an N-linked (GlcNAc...) asparagine glycan. Active-site residues include Asp-113 and Glu-115.

It belongs to the glycosyl hydrolase 25 family.

Its subcellular location is the secreted. It carries out the reaction Hydrolysis of (1-&gt;4)-beta-linkages between N-acetylmuramic acid and N-acetyl-D-glucosamine residues in a peptidoglycan and between N-acetyl-D-glucosamine residues in chitodextrins.. This Dictyostelium discoideum (Social amoeba) protein is Probable GH family 25 lysozyme 5.